We begin with the raw amino-acid sequence, 356 residues long: Alanine racemase, catabolic (356 aa).

Catalysis depends on lysine 35, which acts as the Proton acceptor; specific for D-alanine. An N6-(pyridoxal phosphate)lysine modification is found at lysine 35. Arginine 130 lines the substrate pocket. The active-site Proton acceptor; specific for L-alanine is the tyrosine 253. Methionine 301 serves as a coordination point for substrate.

It belongs to the alanine racemase family. The cofactor is pyridoxal 5'-phosphate.

The catalysed reaction is L-alanine = D-alanine. In terms of biological role, isomerizes L-alanine to D-alanine which is then oxidized to pyruvate by DadA. This is Alanine racemase, catabolic (dadB) from Klebsiella aerogenes (Enterobacter aerogenes).